A 2609-amino-acid polypeptide reads, in one-letter code: Beige protein homolog 1 (2609 aa).

Disordered stretches follow at residues 1654–1679 and 1691–1729; these read DSKL…APVS and ILPS…KNRT. The segment covering 1711–1723 has biased composition (acidic residues); the sequence is MEDEEDDVDEEDK. Residues 1735–1870 form the BEACH-type PH domain; the sequence is ESGDSIQDVY…NRDSLYQKLV (136 aa). Positions 1907-2202 constitute a BEACH domain; sequence ANALSFSTTH…QVFKKPHPQR (296 aa). 5 WD repeats span residues 2249 to 2290, 2294 to 2332, 2340 to 2379, 2429 to 2475, and 2507 to 2546; these read KDEV…QPVM, LHSE…PIKA, GHRY…FVSS, NSDE…NAKL, and ATRQ…SNVH. An FYVE-type zinc finger spans residues 2550–2604; sequence DNTSELCSLCDSRFSLMEWRSQCRACGNSNVCSDCVSMLKDTNIKTCYECYRQMP.

It is found in the cytoplasm. The protein resides in the membrane. In terms of biological role, may be involved in protein sorting and cell wall formation. This is Beige protein homolog 1 (lvs1) from Schizosaccharomyces pombe (strain 972 / ATCC 24843) (Fission yeast).